The sequence spans 437 residues: Immunoglobulin superfamily member 11 (437 aa).

An N-terminal signal peptide occupies residues 1-22 (MTCRGSPLAPLLLFSLHGVAAS). The Ig-like V-type domain maps to 23-136 (LEVSESPGSV…DRGGRNIGVT (114 aa)). The Extracellular portion of the chain corresponds to 23 to 241 (LEVSESPGSV…VISPQPRSIG (219 aa)). 2 disulfide bridges follow: Cys-44/Cys-120 and Cys-165/Cys-215. Asn-102 carries N-linked (GlcNAc...) asparagine glycosylation. The region spanning 144–234 (PSAPHCQIQG…TCLLDLQVIS (91 aa)) is the Ig-like C2-type domain. The chain crosses the membrane as a helical span at residues 242–262 (LIAGAIGTGAVIIIFCIALIL). Over 263 to 437 (GAFFYWRSKN…PAQSRAGSLV (175 aa)) the chain is Cytoplasmic. At Arg-379 the chain carries Omega-N-methylarginine. Residues 382-405 (SLPAVSRSNGSVSRKARPPPVPSL) are disordered.

N-glycosylated.

It is found in the cell membrane. Functions as a cell adhesion molecule through homophilic interaction. Stimulates cell growth. The polypeptide is Immunoglobulin superfamily member 11 (IGSF11) (Bos taurus (Bovine)).